Reading from the N-terminus, the 246-residue chain is Probable septum site-determining protein MinC (246 aa).

The interval 116–140 is disordered; sequence AAVSPPPPPPARAEPAPPAARPAPG. Positions 119-136 are enriched in pro residues; sequence SPPPPPPARAEPAPPAAR.

Belongs to the MinC family. As to quaternary structure, interacts with MinD and FtsZ.

In terms of biological role, cell division inhibitor that blocks the formation of polar Z ring septums. Rapidly oscillates between the poles of the cell to destabilize FtsZ filaments that have formed before they mature into polar Z rings. Prevents FtsZ polymerization. The sequence is that of Probable septum site-determining protein MinC from Xanthomonas oryzae pv. oryzae (strain MAFF 311018).